The sequence spans 155 residues: SsrA-binding protein (155 aa).

It belongs to the SmpB family.

The protein localises to the cytoplasm. Its function is as follows. Required for rescue of stalled ribosomes mediated by trans-translation. Binds to transfer-messenger RNA (tmRNA), required for stable association of tmRNA with ribosomes. tmRNA and SmpB together mimic tRNA shape, replacing the anticodon stem-loop with SmpB. tmRNA is encoded by the ssrA gene; the 2 termini fold to resemble tRNA(Ala) and it encodes a 'tag peptide', a short internal open reading frame. During trans-translation Ala-aminoacylated tmRNA acts like a tRNA, entering the A-site of stalled ribosomes, displacing the stalled mRNA. The ribosome then switches to translate the ORF on the tmRNA; the nascent peptide is terminated with the 'tag peptide' encoded by the tmRNA and targeted for degradation. The ribosome is freed to recommence translation, which seems to be the essential function of trans-translation. This Bacillus cereus (strain 03BB102) protein is SsrA-binding protein.